A 267-amino-acid polypeptide reads, in one-letter code: Dihydropteroate synthase (267 aa).

In terms of domain architecture, Pterin-binding spans 1 to 251; that stretch reads MTKTKIMGIL…NVELNAKLAK (251 aa). Residue Asn11 participates in Mg(2+) binding. Residues Thr51, Asp84, Asn103, Asp167, Lys203, and 239–241 contribute to the (7,8-dihydropterin-6-yl)methyl diphosphate site; that span reads RVH.

This sequence belongs to the DHPS family. In terms of assembly, homodimer. Mg(2+) serves as cofactor.

It carries out the reaction (7,8-dihydropterin-6-yl)methyl diphosphate + 4-aminobenzoate = 7,8-dihydropteroate + diphosphate. It functions in the pathway cofactor biosynthesis; tetrahydrofolate biosynthesis; 7,8-dihydrofolate from 2-amino-4-hydroxy-6-hydroxymethyl-7,8-dihydropteridine diphosphate and 4-aminobenzoate: step 1/2. Catalyzes the condensation of para-aminobenzoate (pABA) with 6-hydroxymethyl-7,8-dihydropterin diphosphate (DHPt-PP) to form 7,8-dihydropteroate (H2Pte), the immediate precursor of folate derivatives. This chain is Dihydropteroate synthase (folP), found in Staphylococcus aureus (strain MW2).